A 543-amino-acid polypeptide reads, in one-letter code: Zinc finger protein 852 (543 aa).

The region spanning 8–82 (VAYEDLSEDY…TSGGLFGVVP (75 aa)) is the KRAB domain. Position 145 is a phosphoserine (Ser-145). 12 C2H2-type zinc fingers span residues 159 to 181 (YRCDECGKAFYWSSHLIGHRRIH), 187 to 209 (YECNECGKTFRQTSQLIVHLRTH), 215 to 237 (YECSECGKAYRHSSHLIQHQRLH), 243 to 265 (YKCNECAKAFNQSSKLFDHQRTH), 271 to 293 (YECKECGAAFSRSKNLVRHQFLH), 299 to 321 (YKCNECGRAFCSNRNLIDHQRTH), 327 to 349 (YKCNECGKAFSRSKCLIRHQSLH), 355 to 377 (YKCSECGKAFNQISQLVEHERIH), 383 to 405 (FKCSECGKAFGLSKCLIRHQRLH), 411 to 433 (YKCNECGKSFNQNSYLIIHQRIH), 439 to 461 (YECNECGKVFSYNSSLMVHQRTH), and 467 to 489 (YKCNSCGKAFSDSSQLTVHQRVH).

This sequence belongs to the krueppel C2H2-type zinc-finger protein family.

The protein resides in the nucleus. Functionally, may be involved in transcriptional regulation. This Homo sapiens (Human) protein is Zinc finger protein 852 (ZNF852).